The primary structure comprises 73 residues: Sec-independent protein translocase protein TatA (73 aa).

A helical transmembrane segment spans residues 1–21 (MGSFSIWHWLIVLVIVMLVFG). The interval 44 to 73 (KSAEDPNEQIPQSTTTAEKTVDVQAKDINK) is disordered. The span at 52-61 (QIPQSTTTAE) shows a compositional bias: polar residues. Residues 62-73 (KTVDVQAKDINK) are compositionally biased toward basic and acidic residues.

This sequence belongs to the TatA/E family. In terms of assembly, the Tat system comprises two distinct complexes: a TatABC complex, containing multiple copies of TatA, TatB and TatC subunits, and a separate TatA complex, containing only TatA subunits. Substrates initially bind to the TatABC complex, which probably triggers association of the separate TatA complex to form the active translocon.

The protein resides in the cell inner membrane. Functionally, part of the twin-arginine translocation (Tat) system that transports large folded proteins containing a characteristic twin-arginine motif in their signal peptide across membranes. TatA could form the protein-conducting channel of the Tat system. This Polynucleobacter asymbioticus (strain DSM 18221 / CIP 109841 / QLW-P1DMWA-1) (Polynucleobacter necessarius subsp. asymbioticus) protein is Sec-independent protein translocase protein TatA.